Consider the following 218-residue polypeptide: Thiopurine S-methyltransferase (218 aa).

S-adenosyl-L-methionine contacts are provided by Trp-10, Leu-45, Glu-66, and Arg-123.

This sequence belongs to the class I-like SAM-binding methyltransferase superfamily. TPMT family.

Its subcellular location is the cytoplasm. It carries out the reaction S-adenosyl-L-methionine + a thiopurine = S-adenosyl-L-homocysteine + a thiopurine S-methylether.. The sequence is that of Thiopurine S-methyltransferase from Shewanella sp. (strain MR-4).